The sequence spans 466 residues: Ribulose bisphosphate carboxylase large chain (466 aa).

K4 bears the N6,N6,N6-trimethyllysine mark. Substrate is bound by residues N113 and T163. K165 functions as the Proton acceptor in the catalytic mechanism. Position 167 (K167) interacts with substrate. The Mg(2+) site is built by K191, D193, and E194. N6-carboxylysine is present on K191. The active-site Proton acceptor is the H284. Positions 285, 317, and 369 each coordinate substrate.

It belongs to the RuBisCO large chain family. Type I subfamily. In terms of assembly, heterohexadecamer of 8 large chains and 8 small chains; disulfide-linked. The disulfide link is formed within the large subunit homodimers. Mg(2+) is required as a cofactor. In terms of processing, the disulfide bond which can form in the large chain dimeric partners within the hexadecamer appears to be associated with oxidative stress and protein turnover.

It is found in the plastid. Its subcellular location is the chloroplast. It catalyses the reaction 2 (2R)-3-phosphoglycerate + 2 H(+) = D-ribulose 1,5-bisphosphate + CO2 + H2O. The catalysed reaction is D-ribulose 1,5-bisphosphate + O2 = 2-phosphoglycolate + (2R)-3-phosphoglycerate + 2 H(+). Functionally, ruBisCO catalyzes two reactions: the carboxylation of D-ribulose 1,5-bisphosphate, the primary event in carbon dioxide fixation, as well as the oxidative fragmentation of the pentose substrate in the photorespiration process. Both reactions occur simultaneously and in competition at the same active site. The sequence is that of Ribulose bisphosphate carboxylase large chain from Nelsonia canescens (Blue pussyleaf).